The following is a 437-amino-acid chain: Methylenetetrahydrofolate--tRNA-(uracil-5-)-methyltransferase TrmFO (437 aa).

10 to 15 (GAGLAG) contributes to the FAD binding site.

The protein belongs to the MnmG family. TrmFO subfamily. FAD serves as cofactor.

The protein localises to the cytoplasm. It carries out the reaction uridine(54) in tRNA + (6R)-5,10-methylene-5,6,7,8-tetrahydrofolate + NADH + H(+) = 5-methyluridine(54) in tRNA + (6S)-5,6,7,8-tetrahydrofolate + NAD(+). It catalyses the reaction uridine(54) in tRNA + (6R)-5,10-methylene-5,6,7,8-tetrahydrofolate + NADPH + H(+) = 5-methyluridine(54) in tRNA + (6S)-5,6,7,8-tetrahydrofolate + NADP(+). Catalyzes the folate-dependent formation of 5-methyl-uridine at position 54 (M-5-U54) in all tRNAs. This Pelotomaculum thermopropionicum (strain DSM 13744 / JCM 10971 / SI) protein is Methylenetetrahydrofolate--tRNA-(uracil-5-)-methyltransferase TrmFO.